The chain runs to 856 residues: Leucine--tRNA ligase (856 aa).

Residues 53-63 (PYPSGNLHMGH) carry the 'HIGH' region motif. A 'KMSKS' region motif is present at residues 622 to 626 (KMSKS). ATP is bound at residue K625.

It belongs to the class-I aminoacyl-tRNA synthetase family.

The protein resides in the cytoplasm. It carries out the reaction tRNA(Leu) + L-leucine + ATP = L-leucyl-tRNA(Leu) + AMP + diphosphate. This chain is Leucine--tRNA ligase, found in Prochlorococcus marinus (strain MIT 9301).